The sequence spans 131 residues: Agouti-signaling protein (131 aa).

An N-terminal signal peptide occupies residues 1-22 (MDVTRLLLATLVGFLCFLTVHS). An N-linked (GlcNAc...) asparagine glycan is attached at Asn39. Residues 58–96 (KSKKISRKEAEKRKRSSKKKASIKKVARPPPPSPCVATR) form a disordered region. Positions 70-84 (RKRSSKKKASIKKVA) are enriched in basic residues. Cystine bridges form between Cys92–Cys107, Cys99–Cys113, Cys106–Cys124, Cys110–Cys131, and Cys115–Cys122. The 40-residue stretch at 92–131 (CVATRDSCKPPAPACCNPCASCQCRFFGSACTCRVLNPNC) folds into the Agouti domain.

Its subcellular location is the secreted. Functionally, involved in the regulation of melanogenesis. The binding of ASP to MC1R precludes alpha-MSH initiated signaling and thus blocks production of cAMP, leading to a down-regulation of eumelanogenesis (brown/black pigment) and thus increasing synthesis of pheomelanin (yellow/red pigment). This chain is Agouti-signaling protein, found in Rattus norvegicus (Rat).